We begin with the raw amino-acid sequence, 188 residues long: Holliday junction branch migration complex subunit RuvA (188 aa).

Residues 1 to 63 (MIEIIEGIYK…QEDMTIYGFD (63 aa)) are domain I. Residues 64–142 (SKVKKETFEK…VVEVNEEMLE (79 aa)) form a domain II region. A region of interest (flexible linker) is located at residue glutamate 142. A domain III region spans residues 142-188 (EAIEALVSLGYSKTQARNAVSKVLKESPNISNVSKIIKEALKILAKI).

It belongs to the RuvA family. Homotetramer. Forms an RuvA(8)-RuvB(12)-Holliday junction (HJ) complex. HJ DNA is sandwiched between 2 RuvA tetramers; dsDNA enters through RuvA and exits via RuvB. An RuvB hexamer assembles on each DNA strand where it exits the tetramer. Each RuvB hexamer is contacted by two RuvA subunits (via domain III) on 2 adjacent RuvB subunits; this complex drives branch migration. In the full resolvosome a probable DNA-RuvA(4)-RuvB(12)-RuvC(2) complex forms which resolves the HJ.

It localises to the cytoplasm. The RuvA-RuvB-RuvC complex processes Holliday junction (HJ) DNA during genetic recombination and DNA repair, while the RuvA-RuvB complex plays an important role in the rescue of blocked DNA replication forks via replication fork reversal (RFR). RuvA specifically binds to HJ cruciform DNA, conferring on it an open structure. The RuvB hexamer acts as an ATP-dependent pump, pulling dsDNA into and through the RuvAB complex. HJ branch migration allows RuvC to scan DNA until it finds its consensus sequence, where it cleaves and resolves the cruciform DNA. This Fervidobacterium nodosum (strain ATCC 35602 / DSM 5306 / Rt17-B1) protein is Holliday junction branch migration complex subunit RuvA.